Here is a 740-residue protein sequence, read N- to C-terminus: Polyribonucleotide nucleotidyltransferase (740 aa).

Mg(2+) contacts are provided by Asp-514 and Asp-520. One can recognise a KH domain in the interval 580 to 639 (PRIITVKIPVDKIGEVIGPKRQMINQIQEDTGAEITIEDDGTIYIGAADGPAAEAARATI). The S1 motif domain maps to 651 to 723 (GERILGSVVK…SRGKLSLIPV (73 aa)).

Belongs to the polyribonucleotide nucleotidyltransferase family. Homotrimer. Mg(2+) serves as cofactor.

It localises to the cytoplasm. It carries out the reaction RNA(n+1) + phosphate = RNA(n) + a ribonucleoside 5'-diphosphate. In terms of biological role, involved in mRNA degradation. Catalyzes the phosphorolysis of single-stranded polyribonucleotides processively in the 3'- to 5'-direction. The protein is Polyribonucleotide nucleotidyltransferase of Streptomyces antibioticus.